The chain runs to 327 residues: Altered inheritance rate of mitochondria protein 25 (327 aa).

This sequence belongs to the phospholipid scramblase family.

It is found in the mitochondrion. This Saccharomyces cerevisiae (strain ATCC 204508 / S288c) (Baker's yeast) protein is Altered inheritance rate of mitochondria protein 25 (AIM25).